A 77-amino-acid chain; its full sequence is Large ribosomal subunit protein bL28 (77 aa).

A disordered region spans residues 1-20 (MSRVCQVTGKGPVTGNNISH).

This sequence belongs to the bacterial ribosomal protein bL28 family.

In Pseudomonas syringae pv. tomato (strain ATCC BAA-871 / DC3000), this protein is Large ribosomal subunit protein bL28.